Here is a 55-residue protein sequence, read N- to C-terminus: Large ribosomal subunit protein bL33 (55 aa).

The protein belongs to the bacterial ribosomal protein bL33 family.

The polypeptide is Large ribosomal subunit protein bL33 (Brucella abortus (strain S19)).